The following is a 353-amino-acid chain: Lipase chaperone (353 aa).

The helical transmembrane segment at 12–32 (IVLYLILGCVVVCGVWYSFDV) threads the bilayer.

Belongs to the lipase chaperone family.

Its subcellular location is the cell inner membrane. Its function is as follows. May be involved in the folding of the extracellular lipase during its passage through the periplasm. In Xylella fastidiosa (strain M23), this protein is Lipase chaperone.